The sequence spans 95 residues: Bombyxin F-1 (95 aa).

A signal peptide spans 1–19; the sequence is MKLVVIVLLVISVSILVSA. 3 disulfides stabilise this stretch: Cys29–Cys82, Cys41–Cys95, and Cys81–Cys86. A propeptide spans 53–71 (c peptide like); it reads NSDMVYEDSGMPELLPADT.

It belongs to the insulin family. In terms of assembly, heterodimer of a B chain and an A chain linked by two disulfide bonds.

It is found in the secreted. This is Bombyxin F-1 (BBXF1) from Bombyx mori (Silk moth).